A 766-amino-acid chain; its full sequence is Pyrophosphate-energized vacuolar membrane proton pump (766 aa).

Residues 2-8 (GAAILPD) are Intravacuolar-facing. Residues 9 to 35 (LGTEILIPVCAVIGIAFALFQWLLVSK) traverse the membrane as a helical segment. Over 36 to 84 (VKLSAVRDASPNAAAKNGYNDYLIEEEEGINDHNVVVKCAEIQNAISEG) the chain is Cytoplasmic. The helical transmembrane segment at 85-114 (ATSFLFTEYKYVGIFMVAFAILIFLFLGSV) threads the bilayer. The Intravacuolar portion of the chain corresponds to 115-135 (EGFSTSPQACSYDKTKTCKPA). Residues cysteine 124 and cysteine 132 are joined by a disulfide bond. A helical membrane pass occupies residues 136–163 (LATAIFSTVSFLLGGVTSLVSGFLGMKI). The Cytoplasmic segment spans residues 164 to 186 (ATYANARTTLEARKGVGKAFITA). Residues 187–216 (FRSGAVMGFLLAANGLLVLYIAINLFKIYY) form a helical membrane-spanning segment. The Intravacuolar portion of the chain corresponds to 217-219 (GDD). The chain crosses the membrane as a helical span at residues 220–248 (WGGLFEAITGYGLGGSSMALFGRVGGGIY). Over 249–286 (TKAADVGADLVGKVERNIPEDDPRNPAVIADNVGDNVG) the chain is Cytoplasmic. Residue lysine 250 participates in substrate binding. Mg(2+) contacts are provided by aspartate 253, aspartate 257, and aspartate 283. A helical transmembrane segment spans residues 287–312 (DIAGMGSDLFGSYAESSCAALVVASI). The Intravacuolar portion of the chain corresponds to 313-320 (SSFGLNHE). A helical transmembrane segment spans residues 321 to 346 (LTAMLYPLIVSSVGILVCLLTTLFAT). Residues 347–354 (DFFEIKAV) lie on the Cytoplasmic side of the membrane. Residues 355–382 (KEIEPALKKQLVISTVLMTIGVAVVSFV) form a helical membrane-spanning segment. Topologically, residues 383 to 401 (ALPTSFTIFNFGVQKDVKS) are intravacuolar. The helical transmembrane segment at 402-425 (WQLFLCVAVGLWAGLIIGFVTEYY) threads the bilayer. Over 426 to 447 (TSNAYSPVQDVADSCRTGAATN) the chain is Cytoplasmic. The helical transmembrane segment at 448–472 (VIFGLALGYKSVIIPIFAIAISIFV) threads the bilayer. Over 473–478 (SFTFAA) the chain is Intravacuolar. The helical transmembrane segment at 479-505 (MYGIAVAALGMLSTIATGLAIDAYGPI) threads the bilayer. Residues 506–534 (SDNAGGIAEMAGMSHRIRERTDALDAAGN) lie on the Cytoplasmic side of the membrane. The Mg(2+) site is built by aspartate 507 and asparagine 534. A helical membrane pass occupies residues 535–563 (TTAAIGKGFAIGSAALVSLALFGAFVSRA). Topologically, residues 564–573 (SITTVDVLTP) are intravacuolar. Residues 574–602 (KVFIGLIVGAMLPYWFSAMTMKSVGSAAL) form a helical membrane-spanning segment. At 603 to 631 (KMVEEVRRQFNTIPGLMEGTAKPDYATCV) the chain is on the cytoplasmic side. A helical membrane pass occupies residues 632-660 (KISTDASIKEMIPPGALVMLTPLVVGILF). Glycine 661 is a topological domain (intravacuolar). Residues 662 to 689 (VETLSGVLAGSLVSGVQIAISASNTGGA) form a helical membrane-spanning segment. At 690-732 (WDNAKKYIEAGASEHARSLGPKGSDCHKAAVIGDTIGDPLKDT) the chain is on the cytoplasmic side. 2 residues coordinate Mg(2+): aspartate 691 and aspartate 727. Position 730 (lysine 730) interacts with substrate. The helical transmembrane segment at 733-758 (SGPSLNILIKLMAVESLVFAPFFATH) threads the bilayer. Over 759-765 (GGLLFKI) the chain is Intravacuolar.

It belongs to the H(+)-translocating pyrophosphatase (TC 3.A.10) family. K(+)-stimulated subfamily. Homodimer.

It localises to the vacuole membrane. It catalyses the reaction diphosphate + H2O + H(+)(in) = 2 phosphate + 2 H(+)(out). Inhibited by excess pyrophosphate as well as excess Mg(2+). Inhibition by ATP, GTP, and CTP is reversed by increasing the Mg(2+) concentration. This suggests that the substrate is a particular metal complex such as MgPPi(2-). Modification of Asp-283 with DCCD abolishes pyrophosphatase activity. Its function is as follows. Proton-translocating inorganic pyrophosphatase that contributes to the transtonoplast (from cytosol to vacuole lumen) H(+)-electrochemical potential difference. It establishes a proton gradient of similar and often greater magnitude than the H(+)-ATPase on the same membrane. This is Pyrophosphate-energized vacuolar membrane proton pump from Vigna radiata var. radiata (Mung bean).